Reading from the N-terminus, the 22-residue chain is thr operon leader peptide (22 aa).

Positions 1–22 (MRNISLTTTIITTTDTTGNGAG) are disordered. Residues 7-22 (TTTIITTTDTTGNGAG) are compositionally biased toward low complexity.

Belongs to the thr operon leader peptide family.

Its function is as follows. This protein is involved in control of the biosynthesis of threonine. This Serratia marcescens protein is thr operon leader peptide.